Here is a 141-residue protein sequence, read N- to C-terminus: Endoribonuclease YbeY (141 aa).

Residues His105, His109, and Asp115 each contribute to the Zn(2+) site.

Belongs to the endoribonuclease YbeY family. It depends on Zn(2+) as a cofactor.

The protein localises to the cytoplasm. Its function is as follows. Single strand-specific metallo-endoribonuclease involved in late-stage 70S ribosome quality control and in maturation of the 3' terminus of the 16S rRNA. This is Endoribonuclease YbeY from Chloroherpeton thalassium (strain ATCC 35110 / GB-78).